The chain runs to 102 residues: Envelope protein US9 (102 aa).

The Intravirion portion of the chain corresponds to 1 to 75; that stretch reads MAGQNTMEGE…KIYHRKKFCY (75 aa). Positions 14-15 match the Di-leucine internalization motif motif; that stretch reads LL. Positions 41–55 are acidic; the sequence is EKCYYSDSENETADE. Residues Ser-46 and Ser-48 each carry the phosphoserine; by host CK2 modification. Residues 76–96 form a helical; Signal-anchor for type II membrane protein membrane-spanning segment; the sequence is ITLIIVFVFAMTGAAFALGYI. Residues 97–102 are Virion surface-facing; the sequence is TSQFVG.

Belongs to the alphaherpesvirinae envelope protein US9 family. Phosphorylated on serines within the acidic cluster, possibly by host CK2. Phosphorylation determines whether endocytosed viral US9 traffics to the trans-Golgi network or recycles to the cell membrane.

The protein localises to the virion membrane. Its subcellular location is the host Golgi apparatus membrane. It localises to the host Golgi apparatus. The protein resides in the host trans-Golgi network. It is found in the host cell membrane. In terms of biological role, essential for the anterograde spread of the infection throughout the host nervous system. Together with the gE/gI heterodimer, US9 is involved in the sorting and transport of viral structural components toward axon tips. This is Envelope protein US9 from Varicella-zoster virus (strain Dumas) (HHV-3).